The primary structure comprises 913 residues: Bifunctional uridylyltransferase/uridylyl-removing enzyme (913 aa).

The interval 1–358 is uridylyltransferase; the sequence is MFNCDVTAID…PDEERPKKQP (358 aa). Residues 359-729 are uridylyl-removing; sequence INARFNQVGD…EHRELALDAV (371 aa). An HD domain is found at 476–592; the sequence is VDAHTLFLIR…TLFADLVGNV (117 aa). 2 ACT domains span residues 730-815 and 838-913; these read QVFV…RIPR and IMSL…NDRV.

This sequence belongs to the GlnD family. Mg(2+) is required as a cofactor.

It catalyses the reaction [protein-PII]-L-tyrosine + UTP = [protein-PII]-uridylyl-L-tyrosine + diphosphate. The enzyme catalyses [protein-PII]-uridylyl-L-tyrosine + H2O = [protein-PII]-L-tyrosine + UMP + H(+). Uridylyltransferase (UTase) activity is inhibited by glutamine, while glutamine activates uridylyl-removing (UR) activity. Modifies, by uridylylation and deuridylylation, the PII regulatory proteins (GlnB and homologs), in response to the nitrogen status of the cell that GlnD senses through the glutamine level. Under low glutamine levels, catalyzes the conversion of the PII proteins and UTP to PII-UMP and PPi, while under higher glutamine levels, GlnD hydrolyzes PII-UMP to PII and UMP (deuridylylation). Thus, controls uridylylation state and activity of the PII proteins, and plays an important role in the regulation of nitrogen assimilation and metabolism. The chain is Bifunctional uridylyltransferase/uridylyl-removing enzyme from Psychrobacter cryohalolentis (strain ATCC BAA-1226 / DSM 17306 / VKM B-2378 / K5).